The chain runs to 1748 residues: Anaphase-promoting complex subunit 1 (1748 aa).

Disordered regions lie at residues 1–24 (MTSKPSTRNDYLPRETHNGEYTGD) and 1435–1479 (VSGV…DPTA). Residues 1435–1450 (VSGVTQVTSNTNTPGN) show a composition bias toward polar residues. The span at 1451-1468 (SDRERVDETAASLDDERS) shows a compositional bias: basic and acidic residues. Phosphoserine is present on S1462.

It belongs to the APC1 family. The APC/C is composed of at least 13 subunits that stay tightly associated throughout the cell cycle: APC1, APC2, APC4, APC5, APC9, APC11, CDC16, CDC23, CDC26, CDC27, DOC1, MND2 and SWM1. APC1 interacts directly with MND2.

Its subcellular location is the nucleus. It is found in the cytoplasm. The protein resides in the cytoskeleton. The protein localises to the spindle pole. The protein operates within protein modification; protein ubiquitination. Its function is as follows. Component of the anaphase promoting complex/cyclosome (APC/C), a cell cycle-regulated E3 ubiquitin-protein ligase complex that controls progression through mitosis and the G1 phase of the cell cycle. The APC/C is thought to confer substrate specificity and, in the presence of ubiquitin-conjugating E2 enzymes, it catalyzes the formation of protein-ubiquitin conjugates that are subsequently degraded by the 26S proteasome. In early mitosis, the APC/C is activated by CDC20 and targets securin PDS1, the B-type cyclin CLB5, and other anaphase inhibitory proteins for proteolysis, thereby triggering the separation of sister chromatids at the metaphase-to-anaphase transition. In late mitosis and in G1, degradation of CLB5 allows activation of the APC/C by CDH1, which is needed to destroy CDC20 and the B-type cyclin CLB2 to allow exit from mitosis and creating the low CDK state necessary for cytokinesis and for reforming prereplicative complexes in G1 prior to another round of replication. The chain is Anaphase-promoting complex subunit 1 (APC1) from Saccharomyces cerevisiae (strain ATCC 204508 / S288c) (Baker's yeast).